The primary structure comprises 308 residues: Pycsar effector protein PaPycTIR (308 aa).

An a nucleoside 3',5'-cyclic phosphate-binding site is contributed by 54–143; that stretch reads LITEDAEDSE…RQVTRQLVDR (90 aa). Residues 160 to 278 are TIR-like; the sequence is VFIICSVEAL…DLKGLTTIGY (119 aa).

It is found in the cytoplasm. It catalyses the reaction NAD(+) + H2O = ADP-D-ribose + nicotinamide + H(+). Pycsar (pyrimidine cyclase system for antiphage resistance) provides immunity against bacteriophage. The pyrimidine cyclase (PycC) synthesizes cyclic nucleotides in response to infection; these serve as specific second messenger signals. The signals activate the adjacent effector, leading to bacterial cell death and abortive phage infection. A clade A Pycsar system. Its function is as follows. The effector gene of a two-gene Pycsar system. Expression of this and adjacent uridylate cyclase PaPycC (AC P0DV40) probably confers resistance to bacteriophage. The genes are probably only expressed in response to bacteriophage infection. Probably only responds to cUMP (produced by its cognate NTP cyclase), acts by depleting cellular NAD(+) levels. The sequence is that of Pycsar effector protein PaPycTIR from Pseudomonas aeruginosa.